Consider the following 235-residue polypeptide: MNVGIIGAMEPEVKILREAMQNPQTLTKAGFTFYTGELAGNTVTLVQSGIGKVASTIATTLLIDNFAPDCVINTGSAGGFDPSLNVGDVVISSEVRHHDVDVTAFGYEIGQVPQMPAGFAAHPKLVAAAEQTIAQISDVKTLVGLICTGDIFMCDPIRIEKARSDFPTMLAVEMEGASIAQTCHTLNTPFVVIRSMSDIAGKESPQSFEEYLETASINSSKMVVALLEKLTAVSL.

Glutamate 12 functions as the Proton acceptor in the catalytic mechanism. Residues glycine 78, methionine 153, and 174–175 (ME) contribute to the substrate site. Aspartate 198 acts as the Proton donor in catalysis.

The protein belongs to the PNP/UDP phosphorylase family. MtnN subfamily.

It carries out the reaction S-adenosyl-L-homocysteine + H2O = S-(5-deoxy-D-ribos-5-yl)-L-homocysteine + adenine. It catalyses the reaction S-methyl-5'-thioadenosine + H2O = 5-(methylsulfanyl)-D-ribose + adenine. The catalysed reaction is 5'-deoxyadenosine + H2O = 5-deoxy-D-ribose + adenine. It participates in amino-acid biosynthesis; L-methionine biosynthesis via salvage pathway; S-methyl-5-thio-alpha-D-ribose 1-phosphate from S-methyl-5'-thioadenosine (hydrolase route): step 1/2. Its function is as follows. Catalyzes the irreversible cleavage of the glycosidic bond in both 5'-methylthioadenosine (MTA) and S-adenosylhomocysteine (SAH/AdoHcy) to adenine and the corresponding thioribose, 5'-methylthioribose and S-ribosylhomocysteine, respectively. Also cleaves 5'-deoxyadenosine, a toxic by-product of radical S-adenosylmethionine (SAM) enzymes, into 5-deoxyribose and adenine. The polypeptide is 5'-methylthioadenosine/S-adenosylhomocysteine nucleosidase (Pseudoalteromonas translucida (strain TAC 125)).